The following is a 443-amino-acid chain: Threonine/serine transporter TdcC (443 aa).

The next 11 helical transmembrane spans lie at 22–42, 44–64, 97–117, 140–160, 163–183, 207–227, 259–279, 319–339, 366–386, 389–409, and 423–443; these read TTWT…FFPI, AGFG…PIAF, GVVI…IYGV, VVAL…KDLM, VMSY…LSLI, ILVT…FSPI, ASML…FTLS, ASII…LGTL, ISMI…PNIL, IEAM…MYAI, and DNVF…YKLF.

Belongs to the amino acid/polyamine transporter 2 family. SdaC/TdcC subfamily.

Its subcellular location is the cell inner membrane. The catalysed reaction is L-threonine(in) + H(+)(in) = L-threonine(out) + H(+)(out). The enzyme catalyses L-serine(in) + H(+)(in) = L-serine(out) + H(+)(out). Functionally, involved in the import of threonine and serine into the cell, with the concomitant import of a proton (symport system). The protein is Threonine/serine transporter TdcC of Salmonella arizonae (strain ATCC BAA-731 / CDC346-86 / RSK2980).